Consider the following 260-residue polypeptide: Snake venom serine protease gussurobin (260 aa).

A signal peptide spans 1 to 18; sequence MVLIRVLANLLILQLSYA. Positions 19-24 are excised as a propeptide; it reads QKSSEL. In terms of domain architecture, Peptidase S1 spans 25–251; it reads IIGGDECNIN…YTEWIQSTIA (227 aa). 6 disulfide bridges follow: Cys31/Cys165, Cys52/Cys68, Cys100/Cys258, Cys144/Cys212, Cys176/Cys191, and Cys202/Cys227. Catalysis depends on charge relay system residues His67 and Asp112. N-linked (GlcNAc...) asparagine glycosylation is found at Asn123 and Asn124. Catalysis depends on Ser206, which acts as the Charge relay system.

The protein belongs to the peptidase S1 family. Snake venom subfamily. As to quaternary structure, monomer. Expressed by the venom gland.

The protein localises to the secreted. Snake venom serine protease that may act in the hemostasis system of the prey. In Gloydius ussuriensis (Ussuri mamushi), this protein is Snake venom serine protease gussurobin.